The chain runs to 117 residues: MRAVSGVVRKKKVKKILNMAKGYYGSHSKQMKQAKEAVIRGLKYAYRDRRQKKRMMRRLWTLRINAACRPLGISYSKFINGLKKANVIIDRKALSNLAIDDYKAFEAVVEVAKKALA.

It belongs to the bacterial ribosomal protein bL20 family.

In terms of biological role, binds directly to 23S ribosomal RNA and is necessary for the in vitro assembly process of the 50S ribosomal subunit. It is not involved in the protein synthesizing functions of that subunit. The polypeptide is Large ribosomal subunit protein bL20 (Brachyspira hyodysenteriae (strain ATCC 49526 / WA1)).